The sequence spans 405 residues: ATP phosphoribosyltransferase regulatory subunit (405 aa).

This sequence belongs to the class-II aminoacyl-tRNA synthetase family. HisZ subfamily. As to quaternary structure, heteromultimer composed of HisG and HisZ subunits.

The protein resides in the cytoplasm. Its pathway is amino-acid biosynthesis; L-histidine biosynthesis; L-histidine from 5-phospho-alpha-D-ribose 1-diphosphate: step 1/9. Required for the first step of histidine biosynthesis. May allow the feedback regulation of ATP phosphoribosyltransferase activity by histidine. In Oceanobacillus iheyensis (strain DSM 14371 / CIP 107618 / JCM 11309 / KCTC 3954 / HTE831), this protein is ATP phosphoribosyltransferase regulatory subunit.